We begin with the raw amino-acid sequence, 448 residues long: Methylenetetrahydrofolate--tRNA-(uracil-5-)-methyltransferase TrmFO (448 aa).

13-18 (GAGLAG) provides a ligand contact to FAD.

The protein belongs to the MnmG family. TrmFO subfamily. FAD is required as a cofactor.

The protein resides in the cytoplasm. It catalyses the reaction uridine(54) in tRNA + (6R)-5,10-methylene-5,6,7,8-tetrahydrofolate + NADH + H(+) = 5-methyluridine(54) in tRNA + (6S)-5,6,7,8-tetrahydrofolate + NAD(+). The enzyme catalyses uridine(54) in tRNA + (6R)-5,10-methylene-5,6,7,8-tetrahydrofolate + NADPH + H(+) = 5-methyluridine(54) in tRNA + (6S)-5,6,7,8-tetrahydrofolate + NADP(+). Functionally, catalyzes the folate-dependent formation of 5-methyl-uridine at position 54 (M-5-U54) in all tRNAs. The chain is Methylenetetrahydrofolate--tRNA-(uracil-5-)-methyltransferase TrmFO from Streptococcus pyogenes serotype M6 (strain ATCC BAA-946 / MGAS10394).